A 170-amino-acid chain; its full sequence is Small ribosomal subunit protein uS5 (170 aa).

Positions leucine 12 to valine 75 constitute an S5 DRBM domain.

Belongs to the universal ribosomal protein uS5 family. In terms of assembly, part of the 30S ribosomal subunit. Contacts proteins S4 and S8.

With S4 and S12 plays an important role in translational accuracy. In terms of biological role, located at the back of the 30S subunit body where it stabilizes the conformation of the head with respect to the body. The polypeptide is Small ribosomal subunit protein uS5 (Wolbachia pipientis wMel).